Reading from the N-terminus, the 306-residue chain is uncharacterized protein (306 aa).

To M.tuberculosis Rv1486c, M.bovis Mb1522c and M.leprae ML1804.

This is an uncharacterized protein from Mycobacterium avium.